Reading from the N-terminus, the 97-residue chain is Defective intron-associated endonuclease 3 (97 aa).

In terms of biological role, this endonuclease is specific to the nrdB gene splice junction and is involved in intron homing. The chain is Defective intron-associated endonuclease 3 (ITEVIIIR) from Escherichia coli (Bacteriophage T4).